The chain runs to 341 residues: S-adenosylmethionine:tRNA ribosyltransferase-isomerase (341 aa).

The protein belongs to the QueA family. As to quaternary structure, monomer.

The protein localises to the cytoplasm. The catalysed reaction is 7-aminomethyl-7-carbaguanosine(34) in tRNA + S-adenosyl-L-methionine = epoxyqueuosine(34) in tRNA + adenine + L-methionine + 2 H(+). The protein operates within tRNA modification; tRNA-queuosine biosynthesis. Transfers and isomerizes the ribose moiety from AdoMet to the 7-aminomethyl group of 7-deazaguanine (preQ1-tRNA) to give epoxyqueuosine (oQ-tRNA). The chain is S-adenosylmethionine:tRNA ribosyltransferase-isomerase from Symbiobacterium thermophilum (strain DSM 24528 / JCM 14929 / IAM 14863 / T).